The chain runs to 391 residues: Elongation factor Tu (391 aa).

In terms of domain architecture, tr-type G spans 10 to 201 (KPHVNIGTIG…AVDEYIPTPA (192 aa)). The tract at residues 19–26 (GHVDHGKT) is G1. Residue 19–26 (GHVDHGKT) coordinates GTP. Position 26 (Thr26) interacts with Mg(2+). The segment at 55–59 (GITIS) is G2. The G3 stretch occupies residues 76–79 (DCPG). Residues 76-80 (DCPGH) and 131-134 (NKVD) contribute to the GTP site. A G4 region spans residues 131-134 (NKVD). The interval 169–171 (SAL) is G5.

Belongs to the TRAFAC class translation factor GTPase superfamily. Classic translation factor GTPase family. EF-Tu/EF-1A subfamily. As to quaternary structure, monomer.

Its subcellular location is the cytoplasm. It catalyses the reaction GTP + H2O = GDP + phosphate + H(+). Its function is as follows. GTP hydrolase that promotes the GTP-dependent binding of aminoacyl-tRNA to the A-site of ribosomes during protein biosynthesis. This Cereibacter sphaeroides (strain ATCC 17025 / ATH 2.4.3) (Rhodobacter sphaeroides) protein is Elongation factor Tu.